We begin with the raw amino-acid sequence, 251 residues long: 3-deoxy-manno-octulosonate cytidylyltransferase (251 aa).

Belongs to the KdsB family.

Its subcellular location is the cytoplasm. It catalyses the reaction 3-deoxy-alpha-D-manno-oct-2-ulosonate + CTP = CMP-3-deoxy-beta-D-manno-octulosonate + diphosphate. It participates in nucleotide-sugar biosynthesis; CMP-3-deoxy-D-manno-octulosonate biosynthesis; CMP-3-deoxy-D-manno-octulosonate from 3-deoxy-D-manno-octulosonate and CTP: step 1/1. It functions in the pathway bacterial outer membrane biogenesis; lipopolysaccharide biosynthesis. Activates KDO (a required 8-carbon sugar) for incorporation into bacterial lipopolysaccharide in Gram-negative bacteria. The protein is 3-deoxy-manno-octulosonate cytidylyltransferase of Parabacteroides distasonis (strain ATCC 8503 / DSM 20701 / CIP 104284 / JCM 5825 / NCTC 11152).